A 187-amino-acid chain; its full sequence is Elongation factor P (187 aa).

The protein belongs to the elongation factor P family.

It localises to the cytoplasm. Its pathway is protein biosynthesis; polypeptide chain elongation. Functionally, involved in peptide bond synthesis. Stimulates efficient translation and peptide-bond synthesis on native or reconstituted 70S ribosomes in vitro. Probably functions indirectly by altering the affinity of the ribosome for aminoacyl-tRNA, thus increasing their reactivity as acceptors for peptidyl transferase. This is Elongation factor P from Nocardioides sp. (strain ATCC BAA-499 / JS614).